The sequence spans 1125 residues: tRNA (34-2'-O)-methyltransferase regulator WDR6 (1125 aa).

An N-acetylmethionine modification is found at M1. WD repeat units lie at residues 89 to 130, 155 to 197, 207 to 246, 256 to 294, 295 to 335, 346 to 384, 433 to 475, 489 to 528, 567 to 605, 611 to 650, 652 to 692, 725 to 765, 767 to 798, 860 to 905, 912 to 958, 982 to 1024, and 1047 to 1085; these read SKGL…GNVA, TDRC…PDNK, GHVGVIFSMSYLESKGLLATASEDRSVRIWKVGDLRVPGG, GHSARVWQVKLLENYLISAGEDCVCLVWSHEGEILQAFR, GHQG…YPGL, SRPGALKAVTLAGSWRVLAVTDVGGLYLYDLEVKCWEQL, LFQG…TGKA, SKQRWHTCSAFLPPGDFLVCGDRRGSVLLFPARPCLFKKP, HGKQGVTSVTCHGGYVYSTGRDGSYYQLFVHGGRLQPVL, RGMNWIAGLRMAPDGSMVVLGFHANEFVVWSPRSHEKLHI, NCGG…IRPN, EHPD…GAAH, LTAVCNHISSVRALAVWGVGTPGGPQDSHPGL, TRYM…RILH, HHKR…DRGS, AHSC…PELE, and AHAAHVTGIKILSPKLMVSASIDQRLTFWRLGNGEPTFM.

It belongs to the WD repeat WDR6 family. In terms of assembly, interacts with FTSJ1; the interaction is direct, and required for 2'-O-methylation of position 34 in substrate tRNAs. Interacts with IRS4. Interacts with STK11/LKB1. Expressed in hypothalamus, hippocampus, cerebrum cortex and cerebellum.

The protein localises to the cytoplasm. In terms of biological role, together with methyltransferase FTSJ1, methylates the 2'-O-ribose of nucleotides at position 34 of the tRNA anticodon loop of substrate tRNAs. Required for the correct positioning of the substrate tRNA for methylation. Required to suppress amino acid starvation-induced autophagy. Enhances the STK11/LKB1-induced cell growth suppression activity. The chain is tRNA (34-2'-O)-methyltransferase regulator WDR6 (Wdr6) from Rattus norvegicus (Rat).